Consider the following 423-residue polypeptide: 5-hydroxytryptamine receptor 1A (423 aa).

The interval 1 to 20 (MEGLSPGQGNNTTSSEGPFG) is disordered. The Extracellular portion of the chain corresponds to 1–38 (MEGLSPGQGNNTTSSEGPFGTRGNATGISDVTFSYQVI). Positions 7-16 (GQGNNTTSSE) are enriched in polar residues. N-linked (GlcNAc...) asparagine glycans are attached at residues Asn10, Asn11, and Asn24. Residues 39–59 (TSLLLGTLIFCAVLGNACVVA) form a helical membrane-spanning segment. The Cytoplasmic portion of the chain corresponds to 60 to 73 (AIALERSLQNVANY). The helical transmembrane segment at 74–98 (LIGSLAVTDLMVSVLVLPMAALYQV) threads the bilayer. At 99 to 107 (LNKWTLGQV) the chain is on the extracellular side. The chain crosses the membrane as a helical span at residues 108-132 (TCDLFIALDVLCCTSSILHLCAIAL). Cys109 and Cys187 are oxidised to a cystine. The serotonin site is built by Asp116 and Cys120. Positions 133-135 (DRY) match the DRY motif; important for ligand-induced conformation changes motif. Over 133 to 152 (DRYWAITDPIDYVNKRTPRR) the chain is Cytoplasmic. The helical transmembrane segment at 153–174 (AAALISLTWLIGFLISIPPMLG) threads the bilayer. Over 175–193 (WRTPEDRSDPDACTISKDH) the chain is Extracellular. The helical transmembrane segment at 194-216 (GYTIYSTFGAFYIPLLLMLVLYG) threads the bilayer. Residues 217–346 (RIFRAARFRI…LARERKTVKT (130 aa)) are Cytoplasmic-facing. The disordered stretch occupies residues 235-277 (RKGADARSGVSPAPQPRKSVNGEPGGREWRQGPGSKAGGPLCT). Residues Lys345, Thr346, and Gly352 each contribute to the 1D-myo-inositol 4-phosphate site. A helical membrane pass occupies residues 347–370 (LGIIMGTFILCWLPFFIVALVLPF). The Extracellular portion of the chain corresponds to 371-378 (CESSCHMP). The helical transmembrane segment at 379 to 403 (TLLGAIINWLGYSNSLLNPVIYAYF) threads the bilayer. Positions 396 to 400 (NPVIY) match the NPxxY motif; important for ligand-induced conformation changes and signaling motif. Positions 403, 404, and 405 each coordinate 1D-myo-inositol 4-phosphate. Topologically, residues 404 to 423 (NKDFQNAFKKIVRCKFCRRR) are cytoplasmic.

The protein belongs to the G-protein coupled receptor 1 family. 5-hydroxytryptamine receptor subfamily. HTR1A sub-subfamily. As to quaternary structure, heterodimer; heterodimerizes with GPER1. Interacts with YIF1B. Interacts with GPR39 and GALR1.

It is found in the cell membrane. Its subcellular location is the cell projection. The protein resides in the dendrite. With respect to regulation, G-protein coupled receptor activity is regulated by lipids: phosphatidylinositol 4-phosphate increases HTR1A-mediated activity. Functionally, G-protein coupled receptor for 5-hydroxytryptamine (serotonin). Also functions as a receptor for various drugs and psychoactive substances. Ligand binding causes a conformation change that triggers signaling via guanine nucleotide-binding proteins (G proteins) and modulates the activity of downstream effectors, such as adenylate cyclase. HTR1A is coupled to G(i)/G(o) G alpha proteins and mediates inhibitory neurotransmission: signaling inhibits adenylate cyclase activity and activates a phosphatidylinositol-calcium second messenger system that regulates the release of Ca(2+) ions from intracellular stores. Beta-arrestin family members regulate signaling by mediating both receptor desensitization and resensitization processes. This chain is 5-hydroxytryptamine receptor 1A (HTR1A), found in Vulpes vulpes (Red fox).